Reading from the N-terminus, the 207-residue chain is GTP cyclohydrolase 1 (207 aa).

Cys94, His97, and Cys167 together coordinate Zn(2+).

This sequence belongs to the GTP cyclohydrolase I family. Toroid-shaped homodecamer, composed of two pentamers of five dimers.

It carries out the reaction GTP + H2O = 7,8-dihydroneopterin 3'-triphosphate + formate + H(+). It functions in the pathway cofactor biosynthesis; 7,8-dihydroneopterin triphosphate biosynthesis; 7,8-dihydroneopterin triphosphate from GTP: step 1/1. This Thermobifida fusca (strain YX) protein is GTP cyclohydrolase 1.